An 83-amino-acid polypeptide reads, in one-letter code: Neurotoxin LmNaTx10 (83 aa).

The first 19 residues, 1 to 19 (MNFLIFIAVASSLALGALC), serve as a signal peptide directing secretion. Residues 21-80 (KEGYPYDGNNCRYICFRNQYCDDLCKKLKGESGYCYGWNQSCYCYGLPDTEKTKPDKRCH) form the LCN-type CS-alpha/beta domain. Cystine bridges form between Cys31–Cys79, Cys35–Cys55, Cys41–Cys62, and Cys45–Cys64.

This sequence belongs to the long (4 C-C) scorpion toxin superfamily. Sodium channel inhibitor family. Alpha subfamily. In terms of tissue distribution, expressed by the venom gland.

It localises to the secreted. Its function is as follows. Binds voltage-independently at site-3 of voltage-gated sodium channels (Nav) and inhibits the inactivation of the activated channels, thereby blocking neuronal transmission. This Lychas mucronatus (Chinese swimming scorpion) protein is Neurotoxin LmNaTx10.